We begin with the raw amino-acid sequence, 310 residues long: Pantothenate kinase (310 aa).

Residue 95-102 (GSVAVGKS) coordinates ATP.

The protein belongs to the prokaryotic pantothenate kinase family.

Its subcellular location is the cytoplasm. The catalysed reaction is (R)-pantothenate + ATP = (R)-4'-phosphopantothenate + ADP + H(+). Its pathway is cofactor biosynthesis; coenzyme A biosynthesis; CoA from (R)-pantothenate: step 1/5. The sequence is that of Pantothenate kinase from Rhodococcus erythropolis (strain PR4 / NBRC 100887).